The chain runs to 118 residues: Large ribosomal subunit protein uL22 (118 aa).

The protein belongs to the universal ribosomal protein uL22 family. In terms of assembly, part of the 50S ribosomal subunit.

Functionally, this protein binds specifically to 23S rRNA; its binding is stimulated by other ribosomal proteins, e.g. L4, L17, and L20. It is important during the early stages of 50S assembly. It makes multiple contacts with different domains of the 23S rRNA in the assembled 50S subunit and ribosome. In terms of biological role, the globular domain of the protein is located near the polypeptide exit tunnel on the outside of the subunit, while an extended beta-hairpin is found that lines the wall of the exit tunnel in the center of the 70S ribosome. In Levilactobacillus brevis (strain ATCC 367 / BCRC 12310 / CIP 105137 / JCM 1170 / LMG 11437 / NCIMB 947 / NCTC 947) (Lactobacillus brevis), this protein is Large ribosomal subunit protein uL22.